The sequence spans 307 residues: Olfactory receptor 13G1 (307 aa).

Residues 1-22 (MNHSVVTEFIILGLTKKPELQG) are Extracellular-facing. Residue asparagine 2 is glycosylated (N-linked (GlcNAc...) asparagine). A helical transmembrane segment spans residues 23 to 43 (IIFLFFLIVYLVAFLGNMLII). The Cytoplasmic portion of the chain corresponds to 44 to 51 (IAKIYNNT). Residues 52–72 (LHTPMYVFLLTLAVVDIICTT) traverse the membrane as a helical segment. The Extracellular segment spans residues 73–96 (SIIPKMLGTMLTSENTISYAGCMS). The cysteines at positions 94 and 186 are disulfide-linked. Residues 97–117 (QLFLFTWSLGAEMVLFTTMAY) traverse the membrane as a helical segment. Residues 118–136 (DRYVAICFPLHYSTIMNHH) lie on the Cytoplasmic side of the membrane. Residues 137-157 (MCVALLSMVMAIAVTNSWVHT) traverse the membrane as a helical segment. Residues 158–194 (ALIMRLTFCGPNTIDHFFCEIPPLLALSCSPVRINEV) lie on the Extracellular side of the membrane. The chain crosses the membrane as a helical span at residues 195–214 (MVYVADITLAIGDFILTCIS). Residues 215–234 (YGFIIVAILRIRTVEGKRKA) are Cytoplasmic-facing. A helical membrane pass occupies residues 235–255 (FSTCSSHLTVVTLYYSPVIYT). The Extracellular segment spans residues 256–268 (YIRPASSYTFERD). A helical membrane pass occupies residues 269–289 (KVVAALYTLVTPTLNPMVYSF). At 290-307 (QNREMQAGIRKVFAFLKH) the chain is on the cytoplasmic side.

This sequence belongs to the G-protein coupled receptor 1 family.

The protein resides in the cell membrane. Its function is as follows. Odorant receptor. This Homo sapiens (Human) protein is Olfactory receptor 13G1 (OR13G1).